Here is a 1083-residue protein sequence, read N- to C-terminus: Kinesin-like protein klp-19 (1083 aa).

In terms of domain architecture, Kinesin motor spans 6-328; sequence SLRVVVRARP…LRYADRAKQI (323 aa). 85–92 lines the ATP pocket; the sequence is GQTGSGKT. Residues 408 to 435 are a coiled coil; it reads MSALTQKNSRLEEDKAKLQSMLTDVRNT. A compositionally biased stretch (acidic residues) spans 458–471; that stretch reads TEESTTLADDDNDE. The tract at residues 458 to 479 is disordered; the sequence is TEESTTLADDDNDETALGGQDD. Positions 487–650 form a coiled coil; it reads LPELQAELDD…KSKLQKREND (164 aa). The span at 1044-1055 shows a compositional bias: polar residues; it reads DDSQPSPSNSTF. A disordered region spans residues 1044 to 1083; it reads DDSQPSPSNSTFVIGAAPTSEADGVPPIKRKSRRTDLGPL.

Belongs to the TRAFAC class myosin-kinesin ATPase superfamily. Kinesin family. As to expression, expressed in the gonad.

The protein localises to the nucleus. It localises to the nucleoplasm. It is found in the cytoplasm. Its subcellular location is the cytoskeleton. The protein resides in the spindle. The protein localises to the chromosome. In terms of biological role, required for chromosome movement and orientation on spindle poles in mitosis and meiosis. May play a role in early anterior-posterior chromosome movement in mitotic embryos. The polypeptide is Kinesin-like protein klp-19 (Caenorhabditis elegans).